We begin with the raw amino-acid sequence, 418 residues long: Actin-related protein 3B (418 aa).

This sequence belongs to the actin family. ARP3 subfamily. Interacts with the Arp2/3 complex composed of ARP2, ARP3, ARPC1B, ARPC1B/p41-ARC, ARPC2/p34-ARC, ARPC3/p21-ARC, ARPC4/p20-ARC and ARPC5/p16-ARC.

Its subcellular location is the cytoplasm. It is found in the cytoskeleton. It localises to the cell projection. Functionally, plays a role in the organization of the actin cytoskeleton. May function as ATP-binding component of the Arp2/3 complex which is involved in regulation of actin polymerization and together with an activating nucleation-promoting factor (NPF) mediates the formation of branched actin networks. May decrease the metastatic potential of tumors. In Mus musculus (Mouse), this protein is Actin-related protein 3B (Actr3b).